A 641-amino-acid polypeptide reads, in one-letter code: DNA mismatch repair protein MutL (641 aa).

Residues 345–445 (PAAVAPPAPA…GDTSLGDTSP (101 aa)) are disordered. Over residues 419–429 (PRTEPATRTGE) the composition is skewed to basic and acidic residues. Over residues 432–442 (GISSGDTSLGD) the composition is skewed to polar residues.

Belongs to the DNA mismatch repair MutL/HexB family.

In terms of biological role, this protein is involved in the repair of mismatches in DNA. It is required for dam-dependent methyl-directed DNA mismatch repair. May act as a 'molecular matchmaker', a protein that promotes the formation of a stable complex between two or more DNA-binding proteins in an ATP-dependent manner without itself being part of a final effector complex. The sequence is that of DNA mismatch repair protein MutL from Azotobacter vinelandii (strain DJ / ATCC BAA-1303).